The following is a 178-amino-acid chain: ATP-dependent protease subunit HslV (178 aa).

Thr8 is an active-site residue. Positions 163, 166, and 169 each coordinate Na(+).

This sequence belongs to the peptidase T1B family. HslV subfamily. In terms of assembly, a double ring-shaped homohexamer of HslV is capped on each side by a ring-shaped HslU homohexamer. The assembly of the HslU/HslV complex is dependent on binding of ATP.

It localises to the cytoplasm. It carries out the reaction ATP-dependent cleavage of peptide bonds with broad specificity.. With respect to regulation, allosterically activated by HslU binding. In terms of biological role, protease subunit of a proteasome-like degradation complex believed to be a general protein degrading machinery. This is ATP-dependent protease subunit HslV from Treponema denticola (strain ATCC 35405 / DSM 14222 / CIP 103919 / JCM 8153 / KCTC 15104).